The primary structure comprises 616 residues: Fatty acyl-CoA reductase 2, chloroplastic (616 aa).

The N-terminal 14 residues, 1 to 14, are a transit peptide targeting the chloroplast; sequence MEALFLSSSSSSIV. The NAD(P)H-binding signature appears at 133-143; it reads FLITGSTGFLA. Catalysis depends on residues Tyr357 and Lys361.

Belongs to the fatty acyl-CoA reductase family. As to expression, expressed in the tapetum of anthers.

The protein localises to the plastid. Its subcellular location is the chloroplast. It carries out the reaction a long-chain fatty acyl-CoA + 2 NADPH + 2 H(+) = a long-chain primary fatty alcohol + 2 NADP(+) + CoA. It catalyses the reaction hexadecanoyl-CoA + 2 NADPH + 2 H(+) = hexadecan-1-ol + 2 NADP(+) + CoA. The catalysed reaction is hexadecanoyl-[ACP] + 2 NADPH + 2 H(+) = hexadecan-1-ol + holo-[ACP] + 2 NADP(+). Functionally, catalyzes the reduction of fatty acyl-CoA and -ACP (acyl carrier protein) substrates to fatty alcohols. Triggers the accumulation of C16 and C18 fatty alcohols; converts palmitoyl-acyl carrier protein to the corresponding C16:0 alcohol with NAD(P)H as electron donor, but seems inactive toward palmitoyl- or other acyl-coenzyme A. Also triggers the formation of some C16:0 aldehydes. Involved in the synthesis of the lipid component in sporopollenin. Required for exine patterning of pollen grain by mediating the formation of pollen wall substances. The polypeptide is Fatty acyl-CoA reductase 2, chloroplastic (Arabidopsis thaliana (Mouse-ear cress)).